The following is an 89-amino-acid chain: Large ribosomal subunit protein eL34 (89 aa).

Belongs to the eukaryotic ribosomal protein eL34 family.

The protein is Large ribosomal subunit protein eL34 of Methanococcus vannielii (strain ATCC 35089 / DSM 1224 / JCM 13029 / OCM 148 / SB).